The chain runs to 529 residues: Bifunctional purine biosynthesis protein PurH (529 aa).

The region spanning 1 to 148 is the MGS-like domain; that stretch reads MTNRNVIKNV…KNYKNVLVVT (148 aa).

It belongs to the PurH family.

The enzyme catalyses (6R)-10-formyltetrahydrofolate + 5-amino-1-(5-phospho-beta-D-ribosyl)imidazole-4-carboxamide = 5-formamido-1-(5-phospho-D-ribosyl)imidazole-4-carboxamide + (6S)-5,6,7,8-tetrahydrofolate. The catalysed reaction is IMP + H2O = 5-formamido-1-(5-phospho-D-ribosyl)imidazole-4-carboxamide. Its pathway is purine metabolism; IMP biosynthesis via de novo pathway; 5-formamido-1-(5-phospho-D-ribosyl)imidazole-4-carboxamide from 5-amino-1-(5-phospho-D-ribosyl)imidazole-4-carboxamide (10-formyl THF route): step 1/1. The protein operates within purine metabolism; IMP biosynthesis via de novo pathway; IMP from 5-formamido-1-(5-phospho-D-ribosyl)imidazole-4-carboxamide: step 1/1. The sequence is that of Bifunctional purine biosynthesis protein PurH from Buchnera aphidicola subsp. Baizongia pistaciae (strain Bp).